We begin with the raw amino-acid sequence, 452 residues long: CCA-adding enzyme (452 aa).

The ATP site is built by S54 and R57. S54 and R57 together coordinate CTP. Residues D66, D68, and D117 each coordinate Mg(2+). ATP is bound by residues H140, K160, and Y169. CTP contacts are provided by H140, K160, and Y169.

Belongs to the tRNA nucleotidyltransferase/poly(A) polymerase family. Archaeal CCA-adding enzyme subfamily. Homodimer. The cofactor is Mg(2+).

The catalysed reaction is a tRNA precursor + 2 CTP + ATP = a tRNA with a 3' CCA end + 3 diphosphate. It catalyses the reaction a tRNA with a 3' CCA end + 2 CTP + ATP = a tRNA with a 3' CCACCA end + 3 diphosphate. Functionally, catalyzes the addition and repair of the essential 3'-terminal CCA sequence in tRNAs without using a nucleic acid template. Adds these three nucleotides in the order of C, C, and A to the tRNA nucleotide-73, using CTP and ATP as substrates and producing inorganic pyrophosphate. tRNA 3'-terminal CCA addition is required both for tRNA processing and repair. Also involved in tRNA surveillance by mediating tandem CCA addition to generate a CCACCA at the 3' terminus of unstable tRNAs. While stable tRNAs receive only 3'-terminal CCA, unstable tRNAs are marked with CCACCA and rapidly degraded. This is CCA-adding enzyme from Halobacterium salinarum (strain ATCC 29341 / DSM 671 / R1).